A 100-amino-acid chain; its full sequence is NADH-quinone oxidoreductase subunit K (100 aa).

The next 3 membrane-spanning stretches (helical) occupy residues 1 to 21 (MIGL…GLAG), 28 to 48 (ILLL…GFVA), and 64 to 84 (FIIS…ILWF).

The protein belongs to the complex I subunit 4L family. As to quaternary structure, NDH-1 is composed of 14 different subunits. Subunits NuoA, H, J, K, L, M, N constitute the membrane sector of the complex.

It localises to the cell inner membrane. It carries out the reaction a quinone + NADH + 5 H(+)(in) = a quinol + NAD(+) + 4 H(+)(out). NDH-1 shuttles electrons from NADH, via FMN and iron-sulfur (Fe-S) centers, to quinones in the respiratory chain. The immediate electron acceptor for the enzyme in this species is believed to be ubiquinone. Couples the redox reaction to proton translocation (for every two electrons transferred, four hydrogen ions are translocated across the cytoplasmic membrane), and thus conserves the redox energy in a proton gradient. This Helicobacter pylori (strain ATCC 700392 / 26695) (Campylobacter pylori) protein is NADH-quinone oxidoreductase subunit K.